A 201-amino-acid chain; its full sequence is FMN-dependent NADH:quinone oxidoreductase (201 aa).

FMN contacts are provided by residues serine 10, 16–18, 96–99, and 140–143; these read SQS, MYNF, and SRGG.

It belongs to the azoreductase type 1 family. As to quaternary structure, homodimer. FMN is required as a cofactor.

It carries out the reaction 2 a quinone + NADH + H(+) = 2 a 1,4-benzosemiquinone + NAD(+). The enzyme catalyses N,N-dimethyl-1,4-phenylenediamine + anthranilate + 2 NAD(+) = 2-(4-dimethylaminophenyl)diazenylbenzoate + 2 NADH + 2 H(+). In terms of biological role, quinone reductase that provides resistance to thiol-specific stress caused by electrophilic quinones. Its function is as follows. Also exhibits azoreductase activity. Catalyzes the reductive cleavage of the azo bond in aromatic azo compounds to the corresponding amines. In Salmonella paratyphi A (strain ATCC 9150 / SARB42), this protein is FMN-dependent NADH:quinone oxidoreductase.